The primary structure comprises 330 residues: Biotin synthase (330 aa).

The 224-residue stretch at 53 to 276 (NNIRLNVLLS…VFPFKELRLS (224 aa)) folds into the Radical SAM core domain. Positions 68, 72, and 75 each coordinate [4Fe-4S] cluster. Cys-112, Cys-144, Cys-204, and Arg-274 together coordinate [2Fe-2S] cluster.

Belongs to the radical SAM superfamily. Biotin synthase family. Homodimer. It depends on [4Fe-4S] cluster as a cofactor. [2Fe-2S] cluster serves as cofactor.

It catalyses the reaction (4R,5S)-dethiobiotin + (sulfur carrier)-SH + 2 reduced [2Fe-2S]-[ferredoxin] + 2 S-adenosyl-L-methionine = (sulfur carrier)-H + biotin + 2 5'-deoxyadenosine + 2 L-methionine + 2 oxidized [2Fe-2S]-[ferredoxin]. It functions in the pathway cofactor biosynthesis; biotin biosynthesis; biotin from 7,8-diaminononanoate: step 2/2. Catalyzes the conversion of dethiobiotin (DTB) to biotin by the insertion of a sulfur atom into dethiobiotin via a radical-based mechanism. The protein is Biotin synthase of Streptococcus agalactiae serotype V (strain ATCC BAA-611 / 2603 V/R).